The following is a 374-amino-acid chain: Queuine tRNA-ribosyltransferase (374 aa).

Aspartate 89 functions as the Proton acceptor in the catalytic mechanism. Substrate-binding positions include 89 to 93 (DSGGF), aspartate 143, glutamine 187, and glycine 214. The RNA binding stretch occupies residues 245–251 (GVGKPED). Aspartate 264 acts as the Nucleophile in catalysis. The interval 269-273 (TRNAR) is RNA binding; important for wobble base 34 recognition. Zn(2+)-binding residues include cysteine 302, cysteine 304, cysteine 307, and histidine 333.

Belongs to the queuine tRNA-ribosyltransferase family. As to quaternary structure, homodimer. Within each dimer, one monomer is responsible for RNA recognition and catalysis, while the other monomer binds to the replacement base PreQ1. It depends on Zn(2+) as a cofactor.

It catalyses the reaction 7-aminomethyl-7-carbaguanine + guanosine(34) in tRNA = 7-aminomethyl-7-carbaguanosine(34) in tRNA + guanine. It participates in tRNA modification; tRNA-queuosine biosynthesis. Functionally, catalyzes the base-exchange of a guanine (G) residue with the queuine precursor 7-aminomethyl-7-deazaguanine (PreQ1) at position 34 (anticodon wobble position) in tRNAs with GU(N) anticodons (tRNA-Asp, -Asn, -His and -Tyr). Catalysis occurs through a double-displacement mechanism. The nucleophile active site attacks the C1' of nucleotide 34 to detach the guanine base from the RNA, forming a covalent enzyme-RNA intermediate. The proton acceptor active site deprotonates the incoming PreQ1, allowing a nucleophilic attack on the C1' of the ribose to form the product. After dissociation, two additional enzymatic reactions on the tRNA convert PreQ1 to queuine (Q), resulting in the hypermodified nucleoside queuosine (7-(((4,5-cis-dihydroxy-2-cyclopenten-1-yl)amino)methyl)-7-deazaguanosine). In Photorhabdus laumondii subsp. laumondii (strain DSM 15139 / CIP 105565 / TT01) (Photorhabdus luminescens subsp. laumondii), this protein is Queuine tRNA-ribosyltransferase.